We begin with the raw amino-acid sequence, 436 residues long: Probable mediator of RNA polymerase II transcription subunit 26b (436 aa).

A disordered region spans residues 71-111; the sequence is PGDDEANRGTTGNGGGGTAVDEDYEVAGGSKESKANSSRGD. A TFIIS N-terminal domain is found at 139–214; it reads KEVARIKEIL…AEWKELVDQW (76 aa). Residues 263-376 form a disordered region; the sequence is HFFDSLDFDG…PQQEKLKGLD (114 aa). 2 stretches are compositionally biased toward basic and acidic residues: residues 276-290 and 332-350; these read NSEE…ERRP and TEQR…EKPM. The stretch at 382–402 forms a coiled coil; it reads EFAKRKLQESYQHHENAKKQR. The segment at 408–436 is disordered; that stretch reads EMIPKQGSAQKPQLKRPGMSNRNWANGRK. The segment covering 427-436 has biased composition (polar residues); it reads SNRNWANGRK.

Belongs to the Mediator complex subunit 26 family. In terms of assembly, component of the Mediator complex.

The protein resides in the nucleus. Its function is as follows. Component of the Mediator complex, a coactivator involved in the regulated transcription of nearly all RNA polymerase II-dependent genes. Mediator functions as a bridge to convey information from gene-specific regulatory proteins to the basal RNA polymerase II transcription machinery. The Mediator complex, having a compact conformation in its free form, is recruited to promoters by direct interactions with regulatory proteins and serves for the assembly of a functional preinitiation complex with RNA polymerase II and the general transcription factors. May play a role in transcription elongation. This Arabidopsis thaliana (Mouse-ear cress) protein is Probable mediator of RNA polymerase II transcription subunit 26b (MED26B).